Consider the following 272-residue polypeptide: ATP synthase subunit a (272 aa).

The next 5 helical transmembrane spans lie at 41–61 (VLNI…LLIF), 101–121 (LIAP…LMDL), 143–165 (VPSA…ILYY), 221–241 (LIFI…LNVP), and 243–263 (AIFH…LTIV).

It belongs to the ATPase A chain family. F-type ATPases have 2 components, CF(1) - the catalytic core - and CF(0) - the membrane proton channel. CF(1) has five subunits: alpha(3), beta(3), gamma(1), delta(1), epsilon(1). CF(0) has three main subunits: a(1), b(2) and c(9-12). The alpha and beta chains form an alternating ring which encloses part of the gamma chain. CF(1) is attached to CF(0) by a central stalk formed by the gamma and epsilon chains, while a peripheral stalk is formed by the delta and b chains.

Its subcellular location is the cell inner membrane. Its function is as follows. Key component of the proton channel; it plays a direct role in the translocation of protons across the membrane. The polypeptide is ATP synthase subunit a (Sodalis glossinidius (strain morsitans)).